The following is a 298-amino-acid chain: Octopine catabolism/uptake operon regulatory protein OccR (298 aa).

Residues 1 to 58 (MNLRQVEAFRAVMLTGQMTAAAELMLVTQPAISRLIKDFEQATKLQLFERRGNHIIPT) enclose the HTH lysR-type domain. The H-T-H motif DNA-binding region spans 18-37 (MTAAAELMLVTQPAISRLIK).

This sequence belongs to the LysR transcriptional regulatory family.

Functionally, positive regulatory protein for the occ operon involved in octopine catabolism and uptake. Also acts as a negative regulator of its expression. This is Octopine catabolism/uptake operon regulatory protein OccR (occR) from Agrobacterium tumefaciens (strain Ach5).